The following is a 265-amino-acid chain: Mlc titration factor A (265 aa).

Positions 111, 148, 152, and 211 each coordinate Zn(2+).

It belongs to the MtfA family. As to quaternary structure, interacts with Mlc. Zn(2+) is required as a cofactor.

It is found in the cytoplasm. In terms of biological role, involved in the modulation of the activity of the glucose-phosphotransferase system (glucose-PTS). Interacts with the transcriptional repressor Mlc, preventing its interaction with DNA and leading to the modulation of expression of genes regulated by Mlc, including ptsG, which encodes the PTS system glucose-specific EIICB component. Its function is as follows. Shows zinc-dependent metallopeptidase activity. The sequence is that of Mlc titration factor A from Enterobacter sp. (strain 638).